We begin with the raw amino-acid sequence, 256 residues long: Lysine-rich coiled-coil protein 1 (256 aa).

Disordered stretches follow at residues 62–84 (RLPS…EDRV) and 144–256 (TIDP…ILGF). Residues 64-79 (PSGTNHSYPRSCSSSQ) show a composition bias toward polar residues. Basic and acidic residues-rich tracts occupy residues 161–188 (HVEE…DLNK) and 218–227 (KTRDVSSKKE). A coiled-coil region spans residues 209–247 (EKLKNRKEKKTRDVSSKKEDRKRRKEKKEQGEERTEEEM).

The polypeptide is Lysine-rich coiled-coil protein 1 (Krcc1) (Mus musculus (Mouse)).